The chain runs to 610 residues: UvrABC system protein C (610 aa).

Residues 16–94 (SQPGVYRMYD…IKLYQPRYNV (79 aa)) enclose the GIY-YIG domain. The UVR domain maps to 204 to 239 (QQVLTQLISRMEEASRLLHFEDAARIRDQIQAVRRV).

Belongs to the UvrC family. Interacts with UvrB in an incision complex.

The protein localises to the cytoplasm. Functionally, the UvrABC repair system catalyzes the recognition and processing of DNA lesions. UvrC both incises the 5' and 3' sides of the lesion. The N-terminal half is responsible for the 3' incision and the C-terminal half is responsible for the 5' incision. This chain is UvrABC system protein C, found in Yersinia enterocolitica serotype O:8 / biotype 1B (strain NCTC 13174 / 8081).